Consider the following 428-residue polypeptide: Putative POM121-like protein 1 (428 aa).

5 disordered regions span residues 1 to 23 (MDSL…RLSP), 36 to 204 (KESG…KFPL), 254 to 293 (DCRP…HKSQ), 306 to 384 (TEVP…PSTL), and 402 to 428 (GPQP…SCPK). Over residues 44-62 (EQDKDPRVQENPGDQRRVP) the composition is skewed to basic and acidic residues. Over residues 106–117 (QTSQTSWTSSCT) the composition is skewed to low complexity. Composition is skewed to polar residues over residues 118 to 129 (NRNAISSSYSST), 144 to 155 (SHCQLTLSSSKT), 260 to 269 (PSHTLSSLAT), 326 to 347 (FSSS…QVTS), and 403 to 415 (PQPQ…RGQN). Over residues 416 to 428 (QRSQTSRTSSCPK) the composition is skewed to low complexity.

This sequence belongs to the POM121 family.

The chain is Putative POM121-like protein 1 (POM121L1P) from Homo sapiens (Human).